The sequence spans 295 residues: Ribosomal protein L11 methyltransferase (295 aa).

S-adenosyl-L-methionine-binding residues include T150, G171, D193, and N232.

Belongs to the methyltransferase superfamily. PrmA family.

Its subcellular location is the cytoplasm. It catalyses the reaction L-lysyl-[protein] + 3 S-adenosyl-L-methionine = N(6),N(6),N(6)-trimethyl-L-lysyl-[protein] + 3 S-adenosyl-L-homocysteine + 3 H(+). Functionally, methylates ribosomal protein L11. This is Ribosomal protein L11 methyltransferase from Neisseria meningitidis serogroup A / serotype 4A (strain DSM 15465 / Z2491).